We begin with the raw amino-acid sequence, 1408 residues long: MKDLLGFLKKQNVSSDFDTIKVTLASPEKIRSWSFGEVKKPETINYRTFKPERDGLFCAKIFGPIRDYECLCGKYKRLKHRGVICEKCGVEVTQSKVRRERMGHIDLATSVAHIWFLKSLPSRIGLMLDMTLKEIEAVLYFEAFMVVDPGLTPLEPWQLLSEEEYLDAMDEYGDEFEAQMGAEAIKKMLQAIDLDAEATRLREEMEATSSETKQKKISKRLKLIDSFVQSGNKPEWMILDVLPVLPPELRPLVPLDGGRFATSDLNDLYRRVINRNNRLKRLLDLMAPDIIVRNEKRMLQESVDSMLDNGRRGRAVTGTNKRQLKSLADMIKGKQGRFRQNLLGKRVDYSGRSVIVVGPSLRLHQCGLPKKMALELFKPFIFSKLQKRGLATTIKAAKKMVEQGLPEVWDVLDEVIREHPVLLNRAPTLHRLGIQAFEPVLIEGKAINLHPLVCSAFNADFDGDQMAVHVPLSLEAQLEARTLMMSTNNLLSPANGDPIIVPSQDVVLGLYYITREKINAKGEGKAFSNWMEVQRALDAKAVHVHTKIKLKIEETVIDDAGVETVKKGIVDTTVGRALLLRILPKGLGFDLLNLNLTKKNISKALNACYRILGPKETVIFADQLMYAGFKWSTLAGLSFCSDDMLIPDDKAPIIERADEQVTEIQRQFAQGLVTEGERYNKVVDIWSHTNELVTKSMMEELQYETVTDAEGNEVKQTSFNSVYMMADSGARGSVAQMRQLGGMRGLMAKPDGSIIETPITANFREGLNVLQYFISTHGARKGLADTALKTANSGYLTRRLVDVAQDVVVTEPDCGTDASITMAPHVEGGEVVEELKERILGRVVAEDVAGLDGEIIVEKGTLLDERLVNLIDESGVDAVKVHSPITCETKFGICQKCYGRDLARGHMVNLGEAVGVMAAQSIGEPGTQLTMRTFHIGGTASASTAQSQVEVKHEGKVKFDNLKTIKNTENQVVVTSRSGEISILDSLGREKERYKIPYGSMLNVKDGIDVTSGNVLATWDAHTHPIITEAEGIIQFGNFDGAVEEHVDELTGLTTHVVKSSKERSSATKELRPYIQLVDDKGEVVPFPGTQTPAMYYLPENSVVVVNQSDKVGAGDILARIPQESSKTKDITGGLPRVADLFEARVPKEPAIMAEVSGVVGFGKETKGKQRLVITQDSGEQHETLIPKWRSVDVFEGERVEKGDVVVDGNPNPHDILRLLGVERLTKYIVDEVQDVYRLQGVRINDKHIETVVRQMLRKVEVRSTGDTSLIKGEQAEFARVLEMNEKVSDEGSVEASYQRVLLGITKASLATESFISAASFQETTRVLTEAAVSGKEDKLVGLKENVIVGRLIPAGTGFAYHKARKEASEKTQRELAAFMNTDDESAVQEEVVEETISVTESVEQTTE.

Zn(2+) is bound by residues Cys70, Cys72, Cys85, and Cys88. Asp460, Asp462, and Asp464 together coordinate Mg(2+). Residues Cys814, Cys887, Cys894, and Cys897 each contribute to the Zn(2+) site.

This sequence belongs to the RNA polymerase beta' chain family. The RNAP catalytic core consists of 2 alpha, 1 beta, 1 beta' and 1 omega subunit. When a sigma factor is associated with the core the holoenzyme is formed, which can initiate transcription. The cofactor is Mg(2+). Zn(2+) is required as a cofactor.

The enzyme catalyses RNA(n) + a ribonucleoside 5'-triphosphate = RNA(n+1) + diphosphate. DNA-dependent RNA polymerase catalyzes the transcription of DNA into RNA using the four ribonucleoside triphosphates as substrates. The polypeptide is DNA-directed RNA polymerase subunit beta' (Hydrogenovibrio crunogenus (strain DSM 25203 / XCL-2) (Thiomicrospira crunogena)).